Consider the following 1078-residue polypeptide: Isoleucine--tRNA ligase (1078 aa).

The short motif at 52-62 (PTANGKPALHH) is the 'HIGH' region element. The 'KMSKS' region motif lies at 637-641 (KMSKS). Lys640 is an ATP binding site.

It belongs to the class-I aminoacyl-tRNA synthetase family. IleS type 2 subfamily. As to quaternary structure, monomer. Requires Zn(2+) as cofactor.

It localises to the cytoplasm. The enzyme catalyses tRNA(Ile) + L-isoleucine + ATP = L-isoleucyl-tRNA(Ile) + AMP + diphosphate. Functionally, catalyzes the attachment of isoleucine to tRNA(Ile). As IleRS can inadvertently accommodate and process structurally similar amino acids such as valine, to avoid such errors it has two additional distinct tRNA(Ile)-dependent editing activities. One activity is designated as 'pretransfer' editing and involves the hydrolysis of activated Val-AMP. The other activity is designated 'posttransfer' editing and involves deacylation of mischarged Val-tRNA(Ile). The chain is Isoleucine--tRNA ligase from Deinococcus radiodurans (strain ATCC 13939 / DSM 20539 / JCM 16871 / CCUG 27074 / LMG 4051 / NBRC 15346 / NCIMB 9279 / VKM B-1422 / R1).